The sequence spans 462 residues: 2-amino-5-chloromuconic acid deaminase (462 aa).

Catalysis depends on charge relay system residues Lys79 and Ser156. Ser180 (acyl-ester intermediate) is an active-site residue.

The protein belongs to the amidase family.

The enzyme catalyses (2Z,4E)-2-aminomuconate + H2O = (3E)-2-oxohex-3-enedioate + NH4(+). It participates in xenobiotic degradation; nitrobenzene degradation. Its pathway is xenobiotic degradation; 4-chloronitrobenzene degradation. Its function is as follows. Involved in the biodegradation of nitroaromatic and chlorinated nitroaromatic compounds. Catalyzes the conversion of 2-amino-5-chloromuconic acid into 2-hydroxy-5-chloromuconic acid and ammonia. Also able to catalyze the transformation of 2-aminomuconic acid into 2-hydroxymuconic acid. This is 2-amino-5-chloromuconic acid deaminase from Comamonas testosteroni (Pseudomonas testosteroni).